The primary structure comprises 464 residues: Cytoplasmic tRNA 2-thiolation protein 2 (464 aa).

This sequence belongs to the CTU2/NCS2 family.

The protein resides in the cytoplasm. The protein operates within tRNA modification; 5-methoxycarbonylmethyl-2-thiouridine-tRNA biosynthesis. In terms of biological role, plays a central role in 2-thiolation of mcm(5)S(2)U at tRNA wobble positions of tRNA(Lys), tRNA(Glu) and tRNA(Gln). May act by forming a heterodimer with NCS6/CTU1 that ligates sulfur from thiocarboxylated URM1 onto the uridine of tRNAs at wobble position. The sequence is that of Cytoplasmic tRNA 2-thiolation protein 2 from Oryza sativa subsp. indica (Rice).